A 503-amino-acid chain; its full sequence is Asparagine--tRNA ligase (503 aa).

The protein belongs to the class-II aminoacyl-tRNA synthetase family. In terms of assembly, homodimer.

Its subcellular location is the cytoplasm. The enzyme catalyses tRNA(Asn) + L-asparagine + ATP = L-asparaginyl-tRNA(Asn) + AMP + diphosphate + H(+). In Aster yellows witches'-broom phytoplasma (strain AYWB), this protein is Asparagine--tRNA ligase.